We begin with the raw amino-acid sequence, 33 residues long: GCTKFMGSCKTDADCCEHLECYKYKWCGWDGTF.

3 disulfides stabilise this stretch: Cys2–Cys16, Cys9–Cys21, and Cys15–Cys27. Position 33 is a phenylalanine amide (Phe33).

In terms of tissue distribution, expressed by the venom gland.

The protein localises to the secreted. In terms of biological role, gating-modifier toxin with very weak activity on Nav1.7/SCN9A and Nav1.8/SCN10A. Shows 22% peak current inhibition (at 10 uM) on Nav1.8/SCN10A sodium channels. Show peak current inhibition and delays fast inactivation on Nav1.7/SCN9A (EC(50)&gt;10 uM). This chain is Mu/delta-theraphotoxin-Pm2a, found in Poecilotheria metallica (Metallic blue ornamental tree spider).